The sequence spans 442 residues: MVDSDPVEFPPENRRGQLFGKYEVGKLVGCGAFAKVYHGRSTATGQSVAIKVVSKQRLQKGGLNGNIQREIAIMHRLRHPSIVRLFEVLATKSKIFFVMEFAKGGELFAKVSKGRFCEDLSRRYFQQLISAVGYCHSRGIFHRDLKPENLLLDEKLDLKISDFGLSALTDQIRPDGLLHTLCGTPAYVAPEVLAKKGYDGAKIDIWSCGIILFVLNAGYLPFNDHNLMVMYRKIYKGEFRIPKWTSPDLRRLLTRLLDTNPQTRITIEEIIHDPWFKQGYDDRMSKFHLEDSDMKLPADETDSEMGARRMNAFDIISGSPGFNLSGLFGDARKYDRVERFVSAWTAERVVERLEEIVSAENLTVAKKETWGMKIEGQKGNFAMVVEINQLTDELVMIEVRKRQRAAASGRDLWTDTLRPFFVELVHESDQTDPEPTQVHTTS.

In terms of domain architecture, Protein kinase spans 22 to 276 (YEVGKLVGCG…IEEIIHDPWF (255 aa)). ATP-binding positions include 28-36 (VGCGAFAKV) and Lys51. Asp144 (proton acceptor) is an active-site residue. The tract at residues 162 to 191 (DFGLSALTDQIRPDGLLHTLCGTPAYVAPE) is activation loop. Ser166 is subject to Phosphoserine. Thr180 is modified (phosphothreonine). The NAF domain maps to 305-329 (MGARRMNAFDIISGSPGFNLSGLFG). The tract at residues 335-365 (DRVERFVSAWTAERVVERLEEIVSAENLTVA) is PPI.

The protein belongs to the protein kinase superfamily. CAMK Ser/Thr protein kinase family. SNF1 subfamily. In terms of assembly, interacts with CBL2. Interacts with CBL3. Interacts with CBL8. Interacts with CBL9. Interacts with KIN10 and KIN11. Mn(2+) serves as cofactor. As to expression, predominant in roots, cauline leaves, and flowers. Ubiquitous with highest expression in 7-day-old seedlings and flower buds, followed by that in cauline leaves and young siliques.

Its subcellular location is the cytoplasm. The protein resides in the nucleus. It carries out the reaction L-seryl-[protein] + ATP = O-phospho-L-seryl-[protein] + ADP + H(+). The catalysed reaction is L-threonyl-[protein] + ATP = O-phospho-L-threonyl-[protein] + ADP + H(+). Its function is as follows. CIPK serine-threonine protein kinases interact with CBL proteins. Binding of a CBL protein to the regulatory NAF domain of CIPK protein lead to the activation of the kinase in a calcium-dependent manner. This is CBL-interacting serine/threonine-protein kinase 14 (CIPK14) from Arabidopsis thaliana (Mouse-ear cress).